Here is a 565-residue protein sequence, read N- to C-terminus: Receptor-like serine/threonine-protein kinase NCRK (565 aa).

Positions 1–23 (MKMRVETALAILLVLISIQQCYG) are cleaved as a signal peptide. Residues 24-103 (GVSNYTCTCF…SKKQYLSRKL (80 aa)) are Extracellular-facing. 5 N-linked (GlcNAc...) asparagine glycosylation sites follow: asparagine 27, asparagine 37, asparagine 45, asparagine 77, and asparagine 85. A helical membrane pass occupies residues 104–124 (VIVILLFCGVLISLAFLASMI). Over 125–565 (CYICRKDKFS…PVLLEPSAHI (441 aa)) the chain is Cytoplasmic. In terms of domain architecture, Protein kinase spans 210–495 (FSSNSVIGHG…REVVQILSTI (286 aa)). Residues 216-224 (IGHGGSSCV) and lysine 238 contribute to the ATP site. The Proton acceptor role is filled by aspartate 339. Phosphothreonine is present on residues threonine 378 and threonine 383. The residue at position 391 (tyrosine 391) is a Phosphotyrosine.

It belongs to the protein kinase superfamily. Ser/Thr protein kinase family. Interacts with ARAC5. In terms of processing, phosphorylated. As to expression, mostly expressed in leaf primordia, root and shoot apical meristems, lateral root primordia, and stele of older roots and hypocotyls. In leaves and cotyledons, highest levels observed in trichomes, vasculatures, and hydathode endothem.

The protein resides in the cell membrane. Its subcellular location is the prevacuolar compartment membrane. It localises to the endosome. The catalysed reaction is L-seryl-[protein] + ATP = O-phospho-L-seryl-[protein] + ADP + H(+). It carries out the reaction L-threonyl-[protein] + ATP = O-phospho-L-threonyl-[protein] + ADP + H(+). In Arabidopsis thaliana (Mouse-ear cress), this protein is Receptor-like serine/threonine-protein kinase NCRK (NCRK).